The following is a 171-amino-acid chain: Ribosome maturation factor RimM (171 aa).

Residues 93–167 (DGVYYYKDIF…KVYVELMEGL (75 aa)) enclose the PRC barrel domain.

This sequence belongs to the RimM family. Binds ribosomal protein uS19.

It localises to the cytoplasm. Its function is as follows. An accessory protein needed during the final step in the assembly of 30S ribosomal subunit, possibly for assembly of the head region. Essential for efficient processing of 16S rRNA. May be needed both before and after RbfA during the maturation of 16S rRNA. It has affinity for free ribosomal 30S subunits but not for 70S ribosomes. The protein is Ribosome maturation factor RimM of Lactobacillus helveticus (strain DPC 4571).